The sequence spans 243 residues: UPF0758 protein alr2351 (243 aa).

An MPN domain is found at 113–235 (PIDSPVAAVA…HQSLREITTL (123 aa)). 3 residues coordinate Zn(2+): H184, H186, and D197. The short motif at 184 to 197 (HNHPSGNVEPSPED) is the JAMM motif element.

It belongs to the UPF0758 family.

The chain is UPF0758 protein alr2351 from Nostoc sp. (strain PCC 7120 / SAG 25.82 / UTEX 2576).